Consider the following 252-residue polypeptide: Receptor expression-enhancing protein 2 (252 aa).

2 consecutive transmembrane segments (helical) span residues 1–21 (MVSWIISRLVVLIFGTLYPAY) and 35–55 (YVKWMMYWIVFAFFTTAETLT). Phosphoserine is present on serine 150. Residues 165 to 252 (LQRPDGRLRP…KKTSGGGDSA (88 aa)) form a disordered region. Basic and acidic residues predominate over residues 203-217 (SRTEASEDDMGDKAP).

The protein belongs to the DP1 family. As to quaternary structure, interacts with odorant receptor proteins. Detected in brain, heart and skeletal muscle, and at low levels in placenta, kidney and pancreas. Expressed in circumvallate papillae.

The protein resides in the membrane. In terms of biological role, required for endoplasmic reticulum (ER) network formation, shaping and remodeling. May enhance the cell surface expression of odorant receptors. The chain is Receptor expression-enhancing protein 2 (REEP2) from Homo sapiens (Human).